Here is a 141-residue protein sequence, read N- to C-terminus: Cystatin (141 aa).

An N-terminal signal peptide occupies residues M1 to M26. Residues G29–W129 enclose the Cystatin domain. The Secondary area of contact motif lies at Q73 to G77. 2 disulfides stabilise this stretch: C91–C107 and C120–C140.

The protein belongs to the cystatin family. In terms of tissue distribution, expressed at a low level by the venom gland (at protein level).

The protein resides in the secreted. Its function is as follows. Inhibits various C1 cysteine proteases including cathepsin L, papain and cathepsin B. This protein has no toxic activity and its function in the venom is unknown. It may play a role as a housekeeping or regulatory protein. The polypeptide is Cystatin (Oxyuranus scutellatus scutellatus (Australian taipan)).